A 1039-amino-acid polypeptide reads, in one-letter code: Integrin alpha-4 (1039 aa).

An N-terminal signal peptide occupies residues 1-40 (MFSTKSAWLRNGGADQGPRGIALREAVMLLLYFGVPTGPS). The Extracellular segment spans residues 41 to 983 (YNLDPENALL…LHHQRPKRHF (943 aa)). 7 FG-GAP repeats span residues 42–107 (NLDP…PNQT), 117–184 (SGEP…TELS), 193–244 (DYTR…QYKA), 246–298 (VDRQ…ENEL), 299–358 (NIVY…GAVM), 362–419 (ERVL…GISS), and 423–485 (QRIE…HPES). 3 N-linked (GlcNAc...) asparagine glycosylation sites follow: Asn-86, Asn-105, and Asn-145. A disulfide bridge links Cys-98 with Cys-108. 2 cysteine pairs are disulfide-bonded: Cys-151-Cys-172 and Cys-190-Cys-205. An N-linked (GlcNAc...) asparagine glycan is attached at Asn-236. 13 residues coordinate Ca(2+): Asp-321, Asn-323, Asp-325, Asp-329, Asp-384, Asp-386, Asp-388, Asp-392, Asp-446, Asp-448, Asn-450, Tyr-452, and Asp-454. A glycan (N-linked (GlcNAc...) asparagine) is linked at Asn-487. 2 cysteine pairs are disulfide-bonded: Cys-493/Cys-502 and Cys-508/Cys-564. N-linked (GlcNAc...) asparagine glycosylation is found at Asn-525 and Asn-545. Positions 613 to 623 (KKEKDVIRKMI) match the SG1 motif. Cys-629 and Cys-634 are joined by a disulfide. Asn-633, Asn-652, and Asn-667 each carry an N-linked (GlcNAc...) asparagine glycan. Cys-705 and Cys-718 are disulfide-bonded. N-linked (GlcNAc...) asparagine glycosylation is found at Asn-813 and Asn-828. Disulfide bonds link Cys-859–Cys-897 and Cys-904–Cys-909. A helical transmembrane segment spans residues 984-1007 (TIIIITISLLLGLIVLLLISCVMW). Residues 1008–1039 (KAGFFKRQYKSILQEENRRDSWSYVNSKSNDD) lie on the Cytoplasmic side of the membrane. A GFFKR motif motif is present at residues 1010 to 1014 (GFFKR). Phosphoserine is present on Ser-1028.

It belongs to the integrin alpha chain family. As to quaternary structure, heterodimer of an alpha and a beta subunit. The alpha subunit can sometimes be cleaved into two non-covalently associated fragments. Alpha-4 associates with either beta-1 or beta-7. Alpha-4 interacts with PXN, LPXN, and TGFB1I1/HIC5. Interacts with CSPG4 through CSPG4 chondroitin sulfate glycosaminoglycan. Interacts with JAML; integrin alpha-4/beta-1 may regulate leukocyte to endothelial cells adhesion by controlling JAML homodimerization. ITGA4:ITGB1 is found in a ternary complex with CX3CR1 and CX3CL1. Interacts with MDK. ITGA4:ITGB1 interacts with MDK; this interaction mediates MDK-induced osteoblast cells migration through PXN phosphorylation. Integrin ITGA4:ITGB1 interacts with SVEP1 (via Sushi domain 21); thereby inhibits Ca(2+) intracellular signaling and as a result represses vasocontraction. ITGA4:ITGB1 interacts with SELP. ITGA4:ITGB1 interacts with BCAM. Post-translationally, phosphorylation on Ser-1028 inhibits PXN binding. Expressed in the media layer of the arterial wall (at protein level). Weakly expression in the thymus, spleen and mesenteric lymph nodes.

The protein resides in the membrane. Its function is as follows. Integrins alpha-4/beta-1 (VLA-4 or LPAM-2) and alpha-4/beta-7 (LPAM-1) are receptors for fibronectin. They recognize one or more domains within the alternatively spliced CS-1 and CS-5 regions of fibronectin. They are also receptors for VCAM1. Integrin alpha-4/beta-1 recognizes the sequence Q-I-D-S in VCAM1. Integrin alpha-4/beta-7 is also a receptor for MADCAM1. It recognizes the sequence L-D-T in MADCAM1. On activated endothelial cells integrin VLA-4 triggers homotypic aggregation for most VLA-4-positive leukocyte cell lines. It may also participate in cytolytic T-cell interactions with target cells. ITGA4:ITGB1 binds to fractalkine (CX3CL1) and may act as its coreceptor in CX3CR1-dependent fractalkine signaling. ITGA4:ITGB1 binds to PLA2G2A via a site (site 2) which is distinct from the classical ligand-binding site (site 1) and this induces integrin conformational changes and enhanced ligand binding to site 1. Integrin ITGA4:ITGB1 represses PRKCA-mediated L-type voltage-gated channel Ca(2+) influx and ROCK-mediated calcium sensitivity in vascular smooth muscle cells via its interaction with SVEP1, thereby inhibiting vasocontraction. The chain is Integrin alpha-4 (Itga4) from Mus musculus (Mouse).